A 184-amino-acid chain; its full sequence is HVA22-like protein c (184 aa).

Helical transmembrane passes span 13 to 33 (VLIK…YPLY), 51 to 71 (LTYW…SKPL), and 73 to 93 (WFPI…LPQF).

This sequence belongs to the DP1 family. Predominantly expressed in flower buds and stem.

The protein localises to the membrane. This Arabidopsis thaliana (Mouse-ear cress) protein is HVA22-like protein c (HVA22C).